Consider the following 583-residue polypeptide: RuBisCO large subunit-binding protein subunit alpha, chloroplastic (583 aa).

Over residues 1 to 14 (MATANALSSPSVLC) the composition is skewed to polar residues. The segment at 1-35 (MATANALSSPSVLCSSRQGKLSGGSQQKGQRVSYR) is disordered. The N-terminal 45 residues, 1–45 (MATANALSSPSVLCSSRQGKLSGGSQQKGQRVSYRKANRRFSLRA), are a transit peptide targeting the chloroplast. Residues 15–31 (SSRQGKLSGGSQQKGQR) are compositionally biased toward low complexity. At serine 89 the chain carries Phosphoserine.

This sequence belongs to the chaperonin (HSP60) family. In terms of assembly, oligomer of probably six alpha and six beta subunits.

Its subcellular location is the plastid. The protein localises to the chloroplast. Its function is as follows. This protein binds RuBisCO small and large subunits and is implicated in the assembly of the enzyme oligomer. The polypeptide is RuBisCO large subunit-binding protein subunit alpha, chloroplastic (Brassica napus (Rape)).